The chain runs to 189 residues: GTP cyclohydrolase 1 (189 aa).

Zn(2+)-binding residues include Cys79, His82, and Cys150.

This sequence belongs to the GTP cyclohydrolase I family. Homomer.

The catalysed reaction is GTP + H2O = 7,8-dihydroneopterin 3'-triphosphate + formate + H(+). It participates in cofactor biosynthesis; 7,8-dihydroneopterin triphosphate biosynthesis; 7,8-dihydroneopterin triphosphate from GTP: step 1/1. This chain is GTP cyclohydrolase 1, found in Rickettsia peacockii (strain Rustic).